The primary structure comprises 532 residues: T-complex protein 1 subunit beta (532 aa).

Belongs to the TCP-1 chaperonin family. Heterooligomeric complex of about 850 to 900 kDa that forms two stacked rings, 12 to 16 nm in diameter.

Its subcellular location is the cytoplasm. Functionally, molecular chaperone; assists the folding of proteins upon ATP hydrolysis. Known to play a role, in vitro, in the folding of actin and tubulin. This is T-complex protein 1 subunit beta (cct2) from Dictyostelium discoideum (Social amoeba).